The chain runs to 511 residues: Ectonucleoside triphosphate diphosphohydrolase 1 (511 aa).

The Cytoplasmic portion of the chain corresponds to methionine 1–asparagine 16. The helical transmembrane segment at isoleucine 17 to leucine 37 threads the bilayer. At threonine 38–tyrosine 478 the chain is on the extracellular side. The interval asparagine 46–glycine 171 is N-terminal lobe. N-linked (GlcNAc...) asparagine glycosylation is present at asparagine 73. Cysteines 84 and 108 form a disulfide. Glutamate 174 functions as the Proton acceptor in the catalytic mechanism. Residues glutamine 205 to methionine 441 form a C-terminal lobe region. 3 N-linked (GlcNAc...) asparagine glycosylation sites follow: asparagine 226, asparagine 291, and asparagine 333. 2 cysteine pairs are disulfide-bonded: cysteine 254/cysteine 300 and cysteine 281/cysteine 324. A disulfide bridge connects residues cysteine 337 and cysteine 342. A glycan (N-linked (GlcNAc...) asparagine) is linked at asparagine 374. Residues cysteine 391 and cysteine 414 are joined by a disulfide bond. 2 N-linked (GlcNAc...) asparagine glycosylation sites follow: asparagine 429 and asparagine 458. The chain crosses the membrane as a helical span at residues isoleucine 479–isoleucine 499. At phenylalanine 500–valine 511 the chain is on the cytoplasmic side.

The protein belongs to the GDA1/CD39 NTPase family. In terms of assembly, homodimer; disulfide-linked. It depends on Ca(2+) as a cofactor. Mg(2+) is required as a cofactor. Post-translationally, N-glycosylated. The N-terminus is blocked. In terms of processing, palmitoylated on Cys-13; which is required for caveola targeting. Expressed in primary neurons and astrocytes, kidney, liver, muscle, thymus, lung and spleen.

It is found in the membrane. The protein localises to the caveola. It catalyses the reaction a ribonucleoside 5'-triphosphate + 2 H2O = a ribonucleoside 5'-phosphate + 2 phosphate + 2 H(+). The catalysed reaction is a ribonucleoside 5'-triphosphate + H2O = a ribonucleoside 5'-diphosphate + phosphate + H(+). The enzyme catalyses a ribonucleoside 5'-diphosphate + H2O = a ribonucleoside 5'-phosphate + phosphate + H(+). It carries out the reaction ATP + 2 H2O = AMP + 2 phosphate + 2 H(+). It catalyses the reaction ATP + H2O = ADP + phosphate + H(+). The catalysed reaction is ADP + H2O = AMP + phosphate + H(+). The enzyme catalyses CTP + 2 H2O = CMP + 2 phosphate + 2 H(+). It carries out the reaction CTP + H2O = CDP + phosphate + H(+). It catalyses the reaction CDP + H2O = CMP + phosphate + H(+). The catalysed reaction is GTP + 2 H2O = GMP + 2 phosphate + 2 H(+). The enzyme catalyses GTP + H2O = GDP + phosphate + H(+). It carries out the reaction GDP + H2O = GMP + phosphate + H(+). It catalyses the reaction ITP + 2 H2O = IMP + 2 phosphate + 2 H(+). The catalysed reaction is ITP + H2O = IDP + phosphate + H(+). The enzyme catalyses IDP + H2O = IMP + phosphate + H(+). It carries out the reaction UTP + 2 H2O = UMP + 2 phosphate + 2 H(+). It catalyses the reaction UTP + H2O = UDP + phosphate + H(+). The catalysed reaction is UDP + H2O = UMP + phosphate + H(+). In terms of biological role, catalyzes the hydrolysis of both di- and triphosphate nucleotides (NDPs and NTPs) and hydrolyze NTPs to nucleotide monophosphates (NMPs) in two distinct successive phosphate-releasing steps, with NDPs as intermediates and participates in the regulation of extracellular levels of nucleotides. By hydrolyzing proinflammatory ATP and platelet-activating ADP to AMP, it blocks platelet aggregation and supports blood flow. The protein is Ectonucleoside triphosphate diphosphohydrolase 1 of Rattus norvegicus (Rat).